The following is a 505-amino-acid chain: Aminoaldehyde dehydrogenase 2 (505 aa).

Residues I31 and D99 each contribute to the Na(+) site. Residues 159-161 (TPW) and 185-188 (KPSE) contribute to the NAD(+) site. L189 provides a ligand contact to Na(+). 238-242 (GSGPT) provides a ligand contact to NAD(+). E260 (proton acceptor) is an active-site residue. Position 261 (L261) interacts with NAD(+). C295 serves as the catalytic Nucleophile. 2 residues coordinate NAD(+): E394 and W460.

This sequence belongs to the aldehyde dehydrogenase family. As to quaternary structure, forms homodimers.

The catalysed reaction is 4-aminobutanal + NAD(+) + H2O = 4-aminobutanoate + NADH + 2 H(+). It carries out the reaction 3-aminopropanal + NAD(+) + H2O = beta-alanine + NADH + 2 H(+). It catalyses the reaction 4-(trimethylamino)butanal + NAD(+) + H2O = 4-(trimethylamino)butanoate + NADH + 2 H(+). The enzyme catalyses 4-guanidinobutanal + NAD(+) + H2O = 4-guanidinobutanoate + NADH + 2 H(+). It functions in the pathway amine and polyamine biosynthesis; betaine biosynthesis via choline pathway; betaine from betaine aldehyde: step 1/1. In terms of biological role, dehydrogenase that catalyzes the oxidation of several aminoaldehydes. Metabolizes and detoxifies aldehyde products of polyamine degradation to non-toxic amino acids. Catalyzes the oxidation of 4-aminobutanal and 3-aminopropanal to 4-aminobutanoate and beta-alanine, respectively. Catalyzes the oxidation of 4-(trimethylamino)butanal and 4-guanidinobutanal to 4-trimethylammoniobutanoate and 4-guanidinobutanoate, respectively. This chain is Aminoaldehyde dehydrogenase 2, found in Solanum lycopersicum (Tomato).